A 261-amino-acid polypeptide reads, in one-letter code: Hydroxylase cctR (261 aa).

Residues 38–58 (VFVSLLILSNTISFGLLGWIG) traverse the membrane as a helical segment. An N-linked (GlcNAc...) asparagine glycan is attached at Asn95. Short sequence motifs (HXXHC) lie at residues 146-150 (HEIHC) and 176-180 (HIAHC).

The protein belongs to the ustYa family.

The protein resides in the membrane. The protein operates within mycotoxin biosynthesis. Functionally, hydroxylase; part of the gene cluster that mediates the biosynthesis of the mycotoxin cyclochlorotine, a hepatotoxic and carcinogenic cyclic chlorinated pentapeptide. Within the pathway, cctR performs the last step by hydroxylating cyclochlorotine to yield hydroxycyclochlorotine. The NRPS cctN initially catalyzes the condensation of L-serine (Ser), Pro, L-2-aminobutyrate (2Abu), Ser, and beta-Phe in this order to produce isocyclotine. After the dichlorination of Pro2 catalyzed by cctP2 to produce isocyclochlorotine, the cctO-mediated transacylation of isocyclochlorotine can furnish cyclochlorotine. The subsequent hydroxylation of cyclochlorotine by cctR yields hydroxycyclochlorotine as the final product. CctP1 probably acts as a phenylalanine aminomutase and provides the uncommon building block beta-Phe. Furthermore, 2Abu can be synthesized from threonine by one of the threonine dehydratases and transaminases localized outside of the cluster. The functions of the remaining proteins encoded by the cluster, cctM and cctT, have not been identified yet. The chain is Hydroxylase cctR from Talaromyces islandicus (Penicillium islandicum).